The primary structure comprises 262 residues: Acyl-[acyl-carrier-protein]--UDP-N-acetylglucosamine O-acyltransferase (262 aa).

It belongs to the transferase hexapeptide repeat family. LpxA subfamily. Homotrimer.

The protein resides in the cytoplasm. The catalysed reaction is a (3R)-hydroxyacyl-[ACP] + UDP-N-acetyl-alpha-D-glucosamine = a UDP-3-O-[(3R)-3-hydroxyacyl]-N-acetyl-alpha-D-glucosamine + holo-[ACP]. The protein operates within glycolipid biosynthesis; lipid IV(A) biosynthesis; lipid IV(A) from (3R)-3-hydroxytetradecanoyl-[acyl-carrier-protein] and UDP-N-acetyl-alpha-D-glucosamine: step 1/6. Involved in the biosynthesis of lipid A, a phosphorylated glycolipid that anchors the lipopolysaccharide to the outer membrane of the cell. The polypeptide is Acyl-[acyl-carrier-protein]--UDP-N-acetylglucosamine O-acyltransferase (Burkholderia multivorans (strain ATCC 17616 / 249)).